The following is a 176-amino-acid chain: NAD(P)H-quinone oxidoreductase subunit 6, chloroplastic (176 aa).

5 consecutive transmembrane segments (helical) span residues 10–30, 32–52, 61–81, 105–125, and 153–173; these read FLLVFLGSGLILGSIGVVLFP, PIYSAFSLGLVLVCISLFYIL, AQLLIYVGAINVLILFAVMFL, ISLFISLISTILDTSWYGIIW, and FLPFELISIILLVALIGAIVI.

The protein belongs to the complex I subunit 6 family. In terms of assembly, NDH is composed of at least 16 different subunits, 5 of which are encoded in the nucleus.

The protein resides in the plastid. It localises to the chloroplast thylakoid membrane. It carries out the reaction a plastoquinone + NADH + (n+1) H(+)(in) = a plastoquinol + NAD(+) + n H(+)(out). The catalysed reaction is a plastoquinone + NADPH + (n+1) H(+)(in) = a plastoquinol + NADP(+) + n H(+)(out). Its function is as follows. NDH shuttles electrons from NAD(P)H:plastoquinone, via FMN and iron-sulfur (Fe-S) centers, to quinones in the photosynthetic chain and possibly in a chloroplast respiratory chain. The immediate electron acceptor for the enzyme in this species is believed to be plastoquinone. Couples the redox reaction to proton translocation, and thus conserves the redox energy in a proton gradient. The sequence is that of NAD(P)H-quinone oxidoreductase subunit 6, chloroplastic (ndhG) from Ipomoea purpurea (Common morning glory).